The sequence spans 346 residues: Cysteinyl leukotriene receptor 2 (346 aa).

Over 1-42 (MERKFMSLQPSISVSEMEPNGTFSNNNSRNCTIENFKREFFP) the chain is Extracellular. N-linked (GlcNAc...) asparagine glycans are attached at residues asparagine 20, asparagine 26, and asparagine 30. Residues 43–63 (IVYLIIFFWGVLGNGLSIYVF) traverse the membrane as a helical segment. Over 64–72 (LQPYKKSTS) the chain is Cytoplasmic. The helical transmembrane segment at 73 to 93 (VNVFMLNLAISDLLFISTLPF) threads the bilayer. Over 94–123 (RADYYLRGSNWIFGDLACRIMSYSLYVNMY) the chain is Extracellular. Cysteine 111 and cysteine 187 form a disulfide bridge. Residues 124–144 (SSIYFLTVLSVVRFLAMVHPF) traverse the membrane as a helical segment. Residues 145–153 (RLLHVTSIR) lie on the Cytoplasmic side of the membrane. A helical transmembrane segment spans residues 154-174 (SAWILCGIIWILIMASSIMLL). At 175-204 (DSGSEQNGSVTSCLELNLYKIAKLQTMNYI) the chain is on the extracellular side. Residue asparagine 181 is glycosylated (N-linked (GlcNAc...) asparagine). A helical membrane pass occupies residues 205 to 225 (ALVVGCLLPFFTLSICYLLII). Over 226-245 (RVLLKVEVPESGLRVSHRKA) the chain is Cytoplasmic. The helical transmembrane segment at 246–266 (LTTIIITLIIFFLCFLPYHTL) threads the bilayer. Topologically, residues 267 to 286 (RTVHLTTWKVGLCKDRLHKA) are extracellular. A helical transmembrane segment spans residues 287-307 (LVITLALAAANACFNPLLYYF). The Cytoplasmic portion of the chain corresponds to 308–346 (AGENFKDRLKSALRKGHPQKAKTKCVFPVSVWLRKETRV).

Belongs to the G-protein coupled receptor 1 family. In terms of tissue distribution, widely expressed, with highest levels in the heart, placenta, spleen, peripheral blood leukocytes and adrenal gland. In lung, expressed in the interstitial macrophages, and slightly in smooth muscle cells.

It localises to the cell membrane. Functionally, receptor for cysteinyl leukotrienes. The response is mediated via a G-protein that activates a phosphatidylinositol-calcium second messenger system. Stimulation by BAY u9773, a partial agonist, induces specific contractions of pulmonary veins and might also have an indirect role in the relaxation of the pulmonary vascular endothelium. The rank order of affinities for the leukotrienes is LTC4 = LTD4 &gt;&gt; LTE4. The sequence is that of Cysteinyl leukotriene receptor 2 (CYSLTR2) from Homo sapiens (Human).